We begin with the raw amino-acid sequence, 508 residues long: Pyruvate kinase (508 aa).

Arginine 56 is a binding site for substrate. 4 residues coordinate K(+): asparagine 58, serine 60, aspartate 90, and threonine 91. Position 58 to 61 (58 to 61) interacts with ATP; the sequence is NFSH. 2 residues coordinate ATP: arginine 97 and lysine 185. Residue glutamate 251 coordinates Mg(2+). Residues glycine 274, aspartate 275, and threonine 307 each coordinate substrate. Aspartate 275 lines the Mg(2+) pocket.

Belongs to the pyruvate kinase family. As to quaternary structure, homotetramer. Requires Mg(2+) as cofactor. The cofactor is K(+).

It carries out the reaction pyruvate + ATP = phosphoenolpyruvate + ADP + H(+). The protein operates within carbohydrate degradation; glycolysis; pyruvate from D-glyceraldehyde 3-phosphate: step 5/5. Regulated by phosphoenolpyruvate substrate and is allosterically activated by ribose-5-phosphate, AMP and other nucleoside monophosphates but not by fructose-1,6-bisphosphate. This chain is Pyruvate kinase (pyk), found in Mycoplasma genitalium (strain ATCC 33530 / DSM 19775 / NCTC 10195 / G37) (Mycoplasmoides genitalium).